The sequence spans 1375 residues: Mediator of RNA polymerase II transcription subunit 13 (1375 aa).

The segment at 1 to 51 is disordered; that stretch reads MKASEMARPPMRPGNPHAFASPATTPSRTASPNNAQGANVRTTQGGNQAGA. Over residues 22–51 the composition is skewed to polar residues; the sequence is PATTPSRTASPNNAQGANVRTTQGGNQAGA. 2 coiled-coil regions span residues 182–216 and 297–324; these read ADDSNRRTSKKKAKMDSLEQNIEKWRMSVQRWLSR and QLERDKILDMQRKAKKAEEDAMRRKDEA. Positions 313–324 are enriched in basic and acidic residues; sequence AEEDAMRRKDEA. Disordered stretches follow at residues 313-333, 350-370, 397-417, 537-581, 660-689, 841-862, and 1233-1285; these read AEEDAMRRKDEAPGLYPSSPF, YPTPPDGIVPGTGISSTDTPS, YTTTDNQQHASTSPTFPAPLE, ATSP…PASL, RAVSDDSASDSESETSDMSEGSPEDPVDTH, QAKGQQRPPPRKPNESNAIPSN, and TPTT…AADP. A compositionally biased stretch (polar residues) spans 397–411; it reads YTTTDNQQHASTSPT. Over residues 666–685 the composition is skewed to acidic residues; that stretch reads SASDSESETSDMSEGSPEDP. The span at 1233–1259 shows a compositional bias: polar residues; the sequence is TPTTPAPSNSSAQANTNTPGSTPQTGV.

It belongs to the Mediator complex subunit 13 family. In terms of assembly, component of the SRB8-11 complex, which itself associates with the Mediator complex.

The protein localises to the nucleus. Functionally, component of the SRB8-11 complex. The SRB8-11 complex is a regulatory module of the Mediator complex which is itself involved in regulation of basal and activated RNA polymerase II-dependent transcription. The SRB8-11 complex may be involved in the transcriptional repression of a subset of genes regulated by Mediator. It may inhibit the association of the Mediator complex with RNA polymerase II to form the holoenzyme complex. The polypeptide is Mediator of RNA polymerase II transcription subunit 13 (SSN2) (Phaeosphaeria nodorum (strain SN15 / ATCC MYA-4574 / FGSC 10173) (Glume blotch fungus)).